The following is a 398-amino-acid chain: MSGSSLPSALALSLLLVSGSLLPGPGAAQNAGFVKSPMSETKLTGDAFELYCDVVGSPTPEIQWWYAEVNRAESFRQLWDGARKRRVTVNTAYGSNGVSVLRITRLTLEDSGTYECRASNDPKRNDLRQNPSITWIRAQATISVLQKPRIVTSEEVIIRDSPVLPVTLQCNLTSSSHTLTYSYWTKNGVELSATRKNASNMEYRINKPRAEDSGEYHCVYHFVSAPKANATIEVKAAPDITGHKRSENKNEGQDATMYCKSVGYPHPDWIWRKKENGMPMDIVNTSGRFFIINKENYTELNIVNLQITEDPGEYECNATNAIGSASVVTVLRVRSHLAPLWPFLGILAEIIILVVIIVVYEKRKRPDEVPDDDEPAGPMKTNSTNNHKDKNLRQRNTN.

A signal peptide spans 1-28; that stretch reads MSGSSLPSALALSLLLVSGSLLPGPGAA. Ig-like domains lie at 29–134, 148–235, and 238–329; these read QNAG…PSIT, PRIV…IEVK, and PDIT…SVVT. The Extracellular segment spans residues 29 to 339; the sequence is QNAGFVKSPM…VLRVRSHLAP (311 aa). A disulfide bridge connects residues cysteine 52 and cysteine 116. The segment at 149–161 is narpin; mediates binding with FGFR1 and has antidepressant-like activity; it reads RIVTSEEVIIRDS. Cysteine 170 and cysteine 218 are oxidised to a cystine. N-linked (GlcNAc...) asparagine glycosylation is found at asparagine 171, asparagine 197, asparagine 229, asparagine 284, asparagine 296, and asparagine 317. Cysteine 259 and cysteine 316 are disulfide-bonded. The helical transmembrane segment at 340-360 threads the bilayer; it reads LWPFLGILAEIIILVVIIVVY. The Cytoplasmic segment spans residues 361 to 398; the sequence is EKRKRPDEVPDDDEPAGPMKTNSTNNHKDKNLRQRNTN. Residues 365–398 are disordered; sequence RPDEVPDDDEPAGPMKTNSTNNHKDKNLRQRNTN.

In terms of assembly, interacts with ATP2B1; this interaction stabilizes ATP2B1 and increases ATPase activity; this interaction controls T cell calcium homeostasis following T cell activation. Interacts with XKR8; promoting its localization at the cell membrane. In terms of tissue distribution, isoform 1 is ubiquitously expressed. Isoform 2 is expressed in brain cortex and cerebellum (at protein level).

It is found in the cell membrane. The protein resides in the postsynaptic density. In terms of biological role, probable homophilic and heterophilic cell adhesion molecule involved in long term potentiation at hippocampal excitatory synapses through activation of p38MAPK. May also regulate neurite outgrowth by activating the FGFR1 signaling pathway. May play a role in synaptic plasticity. Also acts as a chaperone for ATP2B1; stabilizes ATP2B1 and increases its ATPase activity. Promotes localization of XKR8 at the cell membrane. The polypeptide is Neuroplastin (NPTN) (Homo sapiens (Human)).